The primary structure comprises 307 residues: 2,4-diacetylphloroglucinol hydrolase (307 aa).

Residues His142, Glu173, His283, and Glu287 each contribute to the Zn(2+) site.

This sequence belongs to the DAPG/phloretin hydrolase family. Requires Zn(2+) as cofactor.

It catalyses the reaction 2,4-diacetylphloroglucinol + H2O = 2-acetylphloroglucinol + acetate. Its activity is regulated as follows. Activity is strongly reduced by pyoluteorin, an antifungal compound produced by the bacterium. Its function is as follows. Hydrolase that specifically degrades the potent antimicrobial compound 2,4-diacetylphloroglucinol (DAPG) to equimolar amounts of mildly toxic monoacetylphloroglucinol (MAPG) and acetate. Does not degrade other compounds with structures similar to DAPG, such as MAPG and triacetylphloroglucinol, suggesting strict substrate specificity. Degradation of DAPG to MAPG may provide an additional means of fine-tuning levels of this antibiotic or may help avoid accumulation of a metabolite that at high levels may become toxic to the producing bacterium. The protein is 2,4-diacetylphloroglucinol hydrolase of Pseudomonas protegens (strain DSM 19095 / LMG 27888 / CFBP 6595 / CHA0).